A 523-amino-acid chain; its full sequence is Nuclear receptor ROR-alpha (523 aa).

The span at 1–26 (MESAPAAPDPAASEPGSSGSEAAAGS) shows a compositional bias: low complexity. Residues 1-63 (MESAPAAPDP…SRGISVTKKT (63 aa)) are disordered. Position 38 is an N6-methyllysine (K38). 2 NR C4-type zinc fingers span residues 73 to 93 (CKIC…CEGC) and 109 to 133 (CPRQ…LQKC). A DNA-binding region (nuclear receptor) is located at residues 73-138 (CKICGDKSSG…RLQKCLAVGM (66 aa)). The disordered stretch occupies residues 154–183 (DSLYAEVQKHRMQQQQRDHQQQPGEAEPLT). Position 183 is a phosphothreonine; by MAPK1 (T183). Residue K240 forms a Glycyl lysine isopeptide (Lys-Gly) (interchain with G-Cter in SUMO) linkage. An NR LBD domain is found at 272–510 (ELEHLAQNIS…LHFPPLYKEL (239 aa)). The short motif at 506-511 (LYKELF) is the AF-2 element.

This sequence belongs to the nuclear hormone receptor family. NR1 subfamily. Monomer. Interacts (via the DNA-binding domain) with HIF1A; the interaction enhances HIF1A transcription under hypoxia through increasing protein stability. Interacts with CEBPB; the interaction disrupts the interaction CEBPB:EP300. Interacts with the coactivators NCOA2, PPARGC1A (via LXXLL motif), EP300 and MED1. Interacts with the corepressor NCOR1. Interacts with MAGED1 and CTNNB1. Interacts with CRY1 and PER2. Interacts (via AF-2 motif) with PROX1. Interacts with NRIP1. Isoform 4 interacts (via AF-2 motif) with isoform 1 of FOXP3 (via LXXLL motif). Post-translationally, phosphorylation by conventional PKCs in neurons inhibits transcriptional activity. Phosphorylated on Thr-183 by MAPK1/ERK1 in vitro. In terms of processing, sumoylated by SENP1 and SENP2. Sumoylation, promoted by PIAS2, PIAS3, PIAS4 but not PIAS1, enhances the transcriptional activity. Desumoylated by SENP1. Ubiquitinated, leading to its degradation by the proteasome. Proteasomal degradation is required for efficient transcriptional activity and is prevented by HR. Post-translationally, monomethylated at Lys-38 by EZH2, this creates a degron recognized by a DCX (DDB1-DCAF1/VPRBP-CUL4A-RBX1) E3 ubiquitin ligase complex. In terms of tissue distribution, expressed in cerebellum, heart, liver, lung, kidney, retina and brown and white adipose tissues. Expressed in the subset of mature Th17 cells.

Its subcellular location is the nucleus. Functionally, nuclear receptor that binds DNA as a monomer to ROR response elements (RORE) containing a single core motif half-site 5'-AGGTCA-3' preceded by a short A-T-rich sequence. Key regulator of embryonic development, cellular differentiation, immunity, circadian rhythm as well as lipid, steroid, xenobiotics and glucose metabolism. Considered to have intrinsic transcriptional activity, have some natural ligands like oxysterols that act as agonists (25-hydroxycholesterol) or inverse agonists (7-oxygenated sterols), enhancing or repressing the transcriptional activity, respectively. Recruits distinct combinations of cofactors to target genes regulatory regions to modulate their transcriptional expression, depending on the tissue, time and promoter contexts. Regulates genes involved in photoreceptor development including OPN1SW, OPN1SM and ARR3 and skeletal muscle development with MYOD1. Required for proper cerebellum development, regulates SHH gene expression, among others, to induce granule cells proliferation as well as expression of genes involved in calcium-mediated signal transduction. Regulates the circadian expression of several clock genes, including CLOCK, BMAL1, NPAS2 and CRY1. Competes with NR1D1 for binding to their shared DNA response element on some clock genes such as BMAL1, CRY1 and NR1D1 itself, resulting in NR1D1-mediated repression or RORA-mediated activation of clock genes expression, leading to the circadian pattern of clock genes expression. Therefore influences the period length and stability of the clock. Regulates genes involved in lipid metabolism such as apolipoproteins APOA1, APOA5, APOC3 and PPARG. In liver, has specific and redundant functions with RORC as positive or negative modulator of expression of genes encoding phase I and phase II proteins involved in the metabolism of lipids, steroids and xenobiotics, such as CYP7B1 and SULT2A1. Induces a rhythmic expression of some of these genes. In addition, interplays functionally with NR1H2 and NR1H3 for the regulation of genes involved in cholesterol metabolism. Also involved in the regulation of hepatic glucose metabolism through the modulation of G6PC1 and PCK1. In adipose tissue, plays a role as negative regulator of adipocyte differentiation, probably acting through dual mechanisms. May suppress CEBPB-dependent adipogenesis through direct interaction and PPARG-dependent adipogenesis through competition for DNA-binding. Downstream of IL6 and TGFB and synergistically with RORC isoform 2, is implicated in the lineage specification of uncommitted CD4(+) T-helper (T(H)) cells into T(H)17 cells, antagonizing the T(H)1 program. Probably regulates IL17 and IL17F expression on T(H) by binding to the essential enhancer conserved non-coding sequence 2 (CNS2) in the IL17-IL17F locus. Involved in hypoxia signaling by interacting with and activating the transcriptional activity of HIF1A. May inhibit cell growth in response to cellular stress. May exert an anti-inflammatory role by inducing CHUK expression and inhibiting NF-kappa-B signaling. This Mus musculus (Mouse) protein is Nuclear receptor ROR-alpha (Rora).